Consider the following 1068-residue polypeptide: Carbamoyl phosphate synthase large chain (1068 aa).

The segment at 1-401 (MPRRTDLHRI…SLLKAVRSLE (401 aa)) is carboxyphosphate synthetic domain. The ATP site is built by Arg129, Arg169, Gly175, Gly176, Gln208, Ile210, Glu215, Gly241, Val242, His243, Gln284, and Glu298. One can recognise an ATP-grasp 1 domain in the interval 133–327 (KQLMDELGQP…IAKIAAKIAV (195 aa)). Mg(2+) is bound by residues Gln284, Glu298, and Asn300. Mn(2+) is bound by residues Gln284, Glu298, and Asn300. An oligomerization domain region spans residues 402–546 (IGVDHLALRE…YSTYEMENES (145 aa)). The segment at 547–935 (KKSQRPSVLV…ALYKVFEAAN (389 aa)) is carbamoyl phosphate synthetic domain. The ATP-grasp 2 domain maps to 671–867 (ESLLAELGIP…MAEVATRIIL (197 aa)). ATP is bound by residues Arg707, Arg746, Leu748, Glu752, Gly777, Val778, His779, Ser780, Gln820, and Glu838. Mg(2+) is bound by residues Gln820, Glu838, and Asn840. Mn(2+) is bound by residues Gln820, Glu838, and Asn840. The MGS-like domain occupies 936–1068 (LHVPEYGKIL…ESRVFSTESI (133 aa)). An allosteric domain region spans residues 936–1068 (LHVPEYGKIL…ESRVFSTESI (133 aa)).

It belongs to the CarB family. Composed of two chains; the small (or glutamine) chain promotes the hydrolysis of glutamine to ammonia, which is used by the large (or ammonia) chain to synthesize carbamoyl phosphate. Tetramer of heterodimers (alpha,beta)4. It depends on Mg(2+) as a cofactor. Mn(2+) is required as a cofactor.

It catalyses the reaction hydrogencarbonate + L-glutamine + 2 ATP + H2O = carbamoyl phosphate + L-glutamate + 2 ADP + phosphate + 2 H(+). The catalysed reaction is hydrogencarbonate + NH4(+) + 2 ATP = carbamoyl phosphate + 2 ADP + phosphate + 2 H(+). It participates in amino-acid biosynthesis; L-arginine biosynthesis; carbamoyl phosphate from bicarbonate: step 1/1. The protein operates within pyrimidine metabolism; UMP biosynthesis via de novo pathway; (S)-dihydroorotate from bicarbonate: step 1/3. Functionally, large subunit of the glutamine-dependent carbamoyl phosphate synthetase (CPSase). CPSase catalyzes the formation of carbamoyl phosphate from the ammonia moiety of glutamine, carbonate, and phosphate donated by ATP, constituting the first step of 2 biosynthetic pathways, one leading to arginine and/or urea and the other to pyrimidine nucleotides. The large subunit (synthetase) binds the substrates ammonia (free or transferred from glutamine from the small subunit), hydrogencarbonate and ATP and carries out an ATP-coupled ligase reaction, activating hydrogencarbonate by forming carboxy phosphate which reacts with ammonia to form carbamoyl phosphate. The polypeptide is Carbamoyl phosphate synthase large chain (Cutibacterium acnes (strain DSM 16379 / KPA171202) (Propionibacterium acnes)).